A 210-amino-acid chain; its full sequence is Thymidylate kinase (210 aa).

11–18 contacts ATP; that stretch reads GVDGAGKT.

It belongs to the thymidylate kinase family.

The catalysed reaction is dTMP + ATP = dTDP + ADP. Functionally, phosphorylation of dTMP to form dTDP in both de novo and salvage pathways of dTTP synthesis. This Mycoplasma pneumoniae (strain ATCC 29342 / M129 / Subtype 1) (Mycoplasmoides pneumoniae) protein is Thymidylate kinase (tmk).